Reading from the N-terminus, the 432-residue chain is Endosome-associated-trafficking regulator 1 (432 aa).

Ser18 bears the Phosphoserine mark. Residues 126-143 (DTTTSRIYPKEASRHPLG) show a composition bias toward basic and acidic residues. The tract at residues 126 to 145 (DTTTSRIYPKEASRHPLGLE) is disordered. Ser148 is modified (phosphoserine). Residues 174-196 (LEEDEDDGWNITYLPSAVDQTHS) form a required for interaction with PTPN13 region. The segment at 226 to 250 (PPWTLSDTDSRISPASPAGSPNADF) is disordered. Residues Ser241 and Ser245 each carry the phosphoserine modification. Coiled-coil stretches lie at residues 262–289 (LRTL…VQSF) and 315–370 (FHDL…LRSG).

Belongs to the ENTR1 family. As to quaternary structure, found in a complex with ENTR1, PTPN13 and GIT1. Interacts with PTPN13 (via the FERM domain). Interacts (via N-terminus) with GIT1 (via N- and C-terminus); this interaction is direct. Interacts with NOD2. Interacts (via N-terminus) with IFT88. Interacts with VPS35. Post-translationally, phosphorylated.

The protein localises to the cytoplasm. It is found in the early endosome. It localises to the endosome. The protein resides in the recycling endosome. Its subcellular location is the midbody. The protein localises to the cytoskeleton. It is found in the microtubule organizing center. It localises to the centrosome. The protein resides in the cilium basal body. May be involved in modulation of TNF response. May be involved in presentation of TNFRSF1A on the cell surface. Involved in the endosome-to-plasma membrane trafficking and recycling of SNX27-retromer-dependent cargo proteins, such as GLUT1. Involved in the regulation of cytokinesis; the function may involve PTPN13 and GIT1. In terms of biological role, endosome-associated protein that plays a role in membrane receptor sorting, cytokinesis and ciliogenesis. Involved in the endosome-to-plasma membrane trafficking and recycling of SNX27-retromer-dependent cargo proteins, such as GLUT1. Involved in the regulation of cytokinesis; the function may involve PTPN13 and GIT1. Plays a role in the formation of cilia. Involved in cargo protein localization, such as PKD2, at primary cilia. Involved in the presentation of the tumor necrosis factor (TNF) receptor TNFRSF1A on the cell surface, and hence in the modulation of the TNF-induced apoptosis. The protein is Endosome-associated-trafficking regulator 1 of Mus musculus (Mouse).